Here is a 638-residue protein sequence, read N- to C-terminus: ATP-dependent zinc metalloprotease FtsH (638 aa).

Residues 1 to 15 (MDNNHKGPNDPNSKK) lie on the Cytoplasmic side of the membrane. Residues 16-36 (PLLQNPLLLIAIFGIIIFVAM) form a helical membrane-spanning segment. The Periplasmic portion of the chain corresponds to 37–122 (RVMNSDEGFG…INYSGFSESN (86 aa)). Residues 123 to 143 (FFADILGWLLPVLVILGLWMF) traverse the membrane as a helical segment. Residues 144-638 (MASRMQKNMG…RLVPLEEHAS (495 aa)) are Cytoplasmic-facing. An ATP-binding site is contributed by 216–223 (GPPGTGKT). H440 is a Zn(2+) binding site. The active site involves E441. 2 residues coordinate Zn(2+): H444 and D517.

This sequence in the central section; belongs to the AAA ATPase family. In the C-terminal section; belongs to the peptidase M41 family. In terms of assembly, homohexamer. The cofactor is Zn(2+).

It localises to the cell inner membrane. Functionally, acts as a processive, ATP-dependent zinc metallopeptidase for both cytoplasmic and membrane proteins. Plays a role in the quality control of integral membrane proteins. The chain is ATP-dependent zinc metalloprotease FtsH from Helicobacter felis (strain ATCC 49179 / CCUG 28539 / NCTC 12436 / CS1).